We begin with the raw amino-acid sequence, 195 residues long: MTPSRGAWGVVGVDEAGRGPWAGPVVAAAVVLAEPIAGVTDSKRLSARSRERAAALIRSEAVAWGVGRADVTEIDALNIRRATFLAMARAVAVVAETSPIAEVLVDGREIPDDLPAPARPVVGGDALEPAISAASILAKTLRDAEMVLLDEAYPGYGFGRHKGYGTAEHRRALEELGPCPMHRRSFAPVRRLLGG.

Residues 8 to 195 (WGVVGVDEAG…FAPVRRLLGG (188 aa)) form the RNase H type-2 domain. The a divalent metal cation site is built by aspartate 14, glutamate 15, and aspartate 106.

Belongs to the RNase HII family. Requires Mn(2+) as cofactor. Mg(2+) serves as cofactor.

It is found in the cytoplasm. The enzyme catalyses Endonucleolytic cleavage to 5'-phosphomonoester.. Endonuclease that specifically degrades the RNA of RNA-DNA hybrids. The protein is Ribonuclease HII of Halorhodospira halophila (strain DSM 244 / SL1) (Ectothiorhodospira halophila (strain DSM 244 / SL1)).